Here is a 463-residue protein sequence, read N- to C-terminus: Glutamyl-tRNA reductase (463 aa).

Residues 49-52 (TCNR), serine 109, 114-116 (EQQ), and glutamine 120 each bind substrate. The active-site Nucleophile is the cysteine 50. Residue 196 to 201 (GAGAMS) participates in NADP(+) binding.

It belongs to the glutamyl-tRNA reductase family. As to quaternary structure, homodimer.

It carries out the reaction (S)-4-amino-5-oxopentanoate + tRNA(Glu) + NADP(+) = L-glutamyl-tRNA(Glu) + NADPH + H(+). It functions in the pathway porphyrin-containing compound metabolism; protoporphyrin-IX biosynthesis; 5-aminolevulinate from L-glutamyl-tRNA(Glu): step 1/2. Catalyzes the NADPH-dependent reduction of glutamyl-tRNA(Glu) to glutamate 1-semialdehyde (GSA). In Corynebacterium glutamicum (strain ATCC 13032 / DSM 20300 / JCM 1318 / BCRC 11384 / CCUG 27702 / LMG 3730 / NBRC 12168 / NCIMB 10025 / NRRL B-2784 / 534), this protein is Glutamyl-tRNA reductase.